A 284-amino-acid polypeptide reads, in one-letter code: uncharacterized protein (284 aa).

The protein to E.coli YnjA.

This is an uncharacterized protein from Mycobacterium tuberculosis (strain CDC 1551 / Oshkosh).